The following is a 199-amino-acid chain: Photosystem II D1 precursor processing protein PSB27-H2, chloroplastic (199 aa).

This sequence belongs to the Psb27 family. As to quaternary structure, interacts with the C-terminus of both the precursor and mature form of D1.

The protein resides in the plastid. It localises to the chloroplast thylakoid lumen. Functionally, required, but not essential, for D1 (psbA) precursor processing and thus correct photosystem II assembly (PSII). The protein is Photosystem II D1 precursor processing protein PSB27-H2, chloroplastic (PSB27-2) of Arabidopsis thaliana (Mouse-ear cress).